We begin with the raw amino-acid sequence, 198 residues long: Protein FAM219B (198 aa).

2 disordered regions span residues Met1–Pro58 and Arg83–Asn146. Phosphoserine is present on residues Ser14, Ser91, Ser125, and Ser127. Polar residues predominate over residues Arg134–Asn146.

The protein belongs to the FAM219 family.

This is Protein FAM219B (FAM219B) from Homo sapiens (Human).